We begin with the raw amino-acid sequence, 284 residues long: Tropomyosin (284 aa).

A disordered region spans residues 1 to 54 (MDAIKKKMQAMKLEKDNAMDRADTLEQQNKEANNRAEKTEEEIRATQKKMQQVE). The stretch at 1 to 273 (MDAIKKKMQA…KEKYKSITDE (273 aa)) forms a coiled coil. Over residues 12–45 (KLEKDNAMDRADTLEQQNKEANNRAEKTEEEIRA) the composition is skewed to basic and acidic residues.

Belongs to the tropomyosin family. Homodimer. Muscle (at protein level). Expressed in leg and chest protection muscle (at protein level). Expressed in claw muscle.

In terms of biological role, tropomyosin, in association with the troponin complex, plays a central role in the calcium dependent regulation of muscle contraction. In Eriocheir sinensis (Chinese mitten crab), this protein is Tropomyosin.